Here is a 117-residue protein sequence, read N- to C-terminus: Hainantoxin-XV (117 aa).

The signal sequence occupies residues 1–20; the sequence is MKLCAVIIASLLVCVAVASS. A disordered region spans residues 20 to 55; sequence SSDNQKEFAQEKEMTREETQSLGEHEKDDEVTGSEE. The propeptide occupies 21-56; it reads SDNQKEFAQEKEMTREETQSLGEHEKDDEVTGSEER. The span at 23–55 shows a compositional bias: basic and acidic residues; sequence NQKEFAQEKEMTREETQSLGEHEKDDEVTGSEE. Disulfide bonds link Cys-58/Cys-72, Cys-65/Cys-78, Cys-69/Cys-115, and Cys-71/Cys-91.

Belongs to the neurotoxin 03 (Tx2) family. 02 subfamily. HNTX-XV sub-subfamily. Expressed by the venom gland.

It is found in the secreted. Functionally, putative ion channel inhibitor. This is Hainantoxin-XV from Cyriopagopus hainanus (Chinese bird spider).